The following is a 283-amino-acid chain: Pantothenate synthetase 2 (283 aa).

Met-34–His-41 is an ATP binding site. His-41 serves as the catalytic Proton donor. Gln-65 lines the (R)-pantoate pocket. Gln-65 provides a ligand contact to beta-alanine. Residue Gly-152 to Asp-155 participates in ATP binding. Position 158 (Gln-158) interacts with (R)-pantoate. Residues Val-181 and Met-189–Arg-192 each bind ATP.

Belongs to the pantothenate synthetase family. Homodimer.

The protein resides in the cytoplasm. It catalyses the reaction (R)-pantoate + beta-alanine + ATP = (R)-pantothenate + AMP + diphosphate + H(+). It participates in cofactor biosynthesis; (R)-pantothenate biosynthesis; (R)-pantothenate from (R)-pantoate and beta-alanine: step 1/1. Catalyzes the condensation of pantoate with beta-alanine in an ATP-dependent reaction via a pantoyl-adenylate intermediate. The polypeptide is Pantothenate synthetase 2 (Bradyrhizobium diazoefficiens (strain JCM 10833 / BCRC 13528 / IAM 13628 / NBRC 14792 / USDA 110)).